An 88-amino-acid polypeptide reads, in one-letter code: Small ribosomal subunit protein bS16 (88 aa).

The protein belongs to the bacterial ribosomal protein bS16 family.

The protein is Small ribosomal subunit protein bS16 of Mesomycoplasma hyopneumoniae (strain 232) (Mycoplasma hyopneumoniae).